The sequence spans 732 residues: E3 ubiquitin-protein ligase hel2 (732 aa).

The disordered stretch occupies residues 1–48; that stretch reads MSPSGPNLNNKEHNRASEKKNSRTHNKKTNRNQSKEKPVSSRSVETPK. Positions 10 to 21 are enriched in basic and acidic residues; sequence NKEHNRASEKKN. The segment at 81 to 121 adopts an RING-type zinc-finger fold; that stretch reads CFICAEGITYSCVLPCNHRMCHVCALRLRALYKTKECTFCK. The LIM zinc-binding domain maps to 245–315; the sequence is PKCEFCNTHF…RECLERKFVV (71 aa). 3 disordered regions span residues 345 to 380, 411 to 501, and 623 to 732; these read IIPQ…NETA, DFGF…QHQQ, and HDGP…FHIG. Composition is skewed to polar residues over residues 366–380 and 415–433; these read SSTP…NETA and TLSN…TRTI. Low complexity predominate over residues 457–468; that stretch reads SSSAPSVPVSAP. Ser-482 carries the phosphoserine modification. Composition is skewed to polar residues over residues 490 to 501 and 629 to 654; these read PMASSEQAQHQQ and SAPS…NTPS. The segment covering 701-713 has biased composition (low complexity); sequence STPNTSSNRNSNT.

It belongs to the ZNF598/HEL2 family.

It localises to the cytoplasm. It catalyses the reaction S-ubiquitinyl-[E2 ubiquitin-conjugating enzyme]-L-cysteine + [acceptor protein]-L-lysine = [E2 ubiquitin-conjugating enzyme]-L-cysteine + N(6)-ubiquitinyl-[acceptor protein]-L-lysine.. Its pathway is protein modification; protein ubiquitination. In terms of biological role, E3 ubiquitin-protein ligase that plays a key role in the ribosome quality control (RQC), a pathway that takes place when a ribosome has stalled during translation, leading to degradation of nascent peptide chains. Activated when ribosomes are stalled within an mRNA following translation of prematurely polyadenylated mRNAs. Acts as a ribosome collision sensor: specifically recognizes and binds collided ribosome and ubiquitinates the 40S ribosomal proteins rps20/uS10 and rps3/uS3. Catalyzes 'Lys-63'-linked polyubiquitination of rps20/uS10, promoting recruitment of the RQT (ribosome quality control trigger) complex, which drives the disassembly of stalled ribosomes, followed by degradation of nascent peptides. This Schizosaccharomyces pombe (strain 972 / ATCC 24843) (Fission yeast) protein is E3 ubiquitin-protein ligase hel2.